The following is a 272-amino-acid chain: Orotidine 5'-phosphate decarboxylase (272 aa).

Catalysis depends on Lys-95, which acts as the Proton donor.

The protein belongs to the OMP decarboxylase family. Type 2 subfamily.

The catalysed reaction is orotidine 5'-phosphate + H(+) = UMP + CO2. It participates in pyrimidine metabolism; UMP biosynthesis via de novo pathway; UMP from orotate: step 2/2. The polypeptide is Orotidine 5'-phosphate decarboxylase (Cupriavidus taiwanensis (strain DSM 17343 / BCRC 17206 / CCUG 44338 / CIP 107171 / LMG 19424 / R1) (Ralstonia taiwanensis (strain LMG 19424))).